The primary structure comprises 368 residues: UDP-N-acetylglucosamine--N-acetylmuramyl-(pentapeptide) pyrophosphoryl-undecaprenol N-acetylglucosamine transferase (368 aa).

UDP-N-acetyl-alpha-D-glucosamine is bound by residues 11–13, N123, R164, S188, I250, and Q295; that span reads TGG.

It belongs to the glycosyltransferase 28 family. MurG subfamily.

Its subcellular location is the cell inner membrane. It catalyses the reaction di-trans,octa-cis-undecaprenyl diphospho-N-acetyl-alpha-D-muramoyl-L-alanyl-D-glutamyl-meso-2,6-diaminopimeloyl-D-alanyl-D-alanine + UDP-N-acetyl-alpha-D-glucosamine = di-trans,octa-cis-undecaprenyl diphospho-[N-acetyl-alpha-D-glucosaminyl-(1-&gt;4)]-N-acetyl-alpha-D-muramoyl-L-alanyl-D-glutamyl-meso-2,6-diaminopimeloyl-D-alanyl-D-alanine + UDP + H(+). It participates in cell wall biogenesis; peptidoglycan biosynthesis. Functionally, cell wall formation. Catalyzes the transfer of a GlcNAc subunit on undecaprenyl-pyrophosphoryl-MurNAc-pentapeptide (lipid intermediate I) to form undecaprenyl-pyrophosphoryl-MurNAc-(pentapeptide)GlcNAc (lipid intermediate II). This chain is UDP-N-acetylglucosamine--N-acetylmuramyl-(pentapeptide) pyrophosphoryl-undecaprenol N-acetylglucosamine transferase, found in Solidesulfovibrio magneticus (strain ATCC 700980 / DSM 13731 / RS-1) (Desulfovibrio magneticus).